We begin with the raw amino-acid sequence, 64 residues long: Large ribosomal subunit protein bL33 (64 aa).

This sequence belongs to the bacterial ribosomal protein bL33 family.

The polypeptide is Large ribosomal subunit protein bL33 (Crocosphaera subtropica (strain ATCC 51142 / BH68) (Cyanothece sp. (strain ATCC 51142))).